A 695-amino-acid polypeptide reads, in one-letter code: Probable rhamnogalacturonate lyase C (695 aa).

Residues 1-21 (MFLPSRKALAFLACLASHSVA) form the signal peptide. N-linked (GlcNAc...) asparagine glycosylation is found at Asn28, Asn96, Asn118, Asn144, Asn199, Asn285, Asn532, and Asn638.

It belongs to the polysaccharide lyase 4 family.

The protein resides in the secreted. The enzyme catalyses Endotype eliminative cleavage of L-alpha-rhamnopyranosyl-(1-&gt;4)-alpha-D-galactopyranosyluronic acid bonds of rhamnogalacturonan I domains in ramified hairy regions of pectin leaving L-rhamnopyranose at the reducing end and 4-deoxy-4,5-unsaturated D-galactopyranosyluronic acid at the non-reducing end.. In terms of biological role, pectinolytic enzymes consist of four classes of enzymes: pectin lyase, polygalacturonase, pectin methylesterase and rhamnogalacturonase. Degrades the rhamnogalacturonan I (RG-I) backbone of pectin. This is Probable rhamnogalacturonate lyase C (rglC) from Aspergillus oryzae (strain ATCC 42149 / RIB 40) (Yellow koji mold).